The sequence spans 185 residues: Ribosome-recycling factor (185 aa).

This sequence belongs to the RRF family.

The protein resides in the cytoplasm. Responsible for the release of ribosomes from messenger RNA at the termination of protein biosynthesis. May increase the efficiency of translation by recycling ribosomes from one round of translation to another. In Chromobacterium violaceum (strain ATCC 12472 / DSM 30191 / JCM 1249 / CCUG 213 / NBRC 12614 / NCIMB 9131 / NCTC 9757 / MK), this protein is Ribosome-recycling factor.